The following is a 462-amino-acid chain: Solute carrier family 41 member 3 (462 aa).

Helical transmembrane passes span 41 to 61, 121 to 141, 163 to 183, 194 to 214, 225 to 245, 258 to 278, 351 to 371, 380 to 400, and 424 to 444; these read CQVA…GLVM, LAVV…ASLM, VITA…IVIG, IATP…LALM, WYLT…WIFI, YGWF…LILS, VLLF…CLVE, IFVL…LYLA, and GLGD…DWLL.

The protein belongs to the SLC41A transporter family.

It localises to the mitochondrion inner membrane. It catalyses the reaction Mg(2+)(in) + 2 Na(+)(out) = Mg(2+)(out) + 2 Na(+)(in). Functionally, na(+)/Mg(2+) ion exchanger that acts as a predominant Mg(2+) efflux system at the mitochondrial inner membrane. The sequence is that of Solute carrier family 41 member 3 (Slc41a3) from Rattus norvegicus (Rat).